The primary structure comprises 506 residues: Maturase K (506 aa).

The protein belongs to the intron maturase 2 family. MatK subfamily.

The protein resides in the plastid. It is found in the chloroplast. Its function is as follows. Usually encoded in the trnK tRNA gene intron. Probably assists in splicing its own and other chloroplast group II introns. The chain is Maturase K from Crataegus monogyna (Hawthorn).